Reading from the N-terminus, the 556-residue chain is Acetyl-coenzyme A thioesterase (556 aa).

The HotDog ACOT-type 1 domain maps to 6–118 (APGEVLMSQA…FSTFVVKPLG (113 aa)). N6-succinyllysine is present on K34. CoA contacts are provided by residues 54 to 56 (TAS) and 83 to 85 (STS). K97 carries the post-translational modification N6-succinyllysine. R145 contributes to the CoA binding site. 2 positions are modified to N6-succinyllysine: K160 and K229. The HotDog ACOT-type 2 domain occupies 180-295 (MATSVQSIEL…FLIYNAVDDQ (116 aa)). Residue 235-237 (KFR) coordinates CoA. In terms of domain architecture, START spans 341 to 550 (GTQWDISKKG…IKFIENATHD (210 aa)).

In terms of assembly, homodimer or homotetramer.

The protein localises to the cytoplasm. Its subcellular location is the cytosol. It carries out the reaction acetyl-CoA + H2O = acetate + CoA + H(+). The enzyme catalyses butanoyl-CoA + H2O = butanoate + CoA + H(+). It catalyses the reaction hexanoyl-CoA + H2O = hexanoate + CoA + H(+). It participates in lipid metabolism; fatty acid metabolism. With respect to regulation, allosterically regulated by ATP (activator) and ADP (inhibitor). Cold labile, it dissociates into inactive monomers at low temperature. Catalyzes the hydrolysis of acyl-CoAs into free fatty acids and coenzyme A (CoASH), regulating their respective intracellular levels. Preferentially hydrolyzes acetyl-CoA. This Rattus norvegicus (Rat) protein is Acetyl-coenzyme A thioesterase (Acot12).